The following is a 690-amino-acid chain: Beta-galactosidase (690 aa).

Asparagine 173 contributes to the substrate binding site. The active-site Proton donor is glutamate 174. Position 345 (tryptophan 345) interacts with substrate.

This sequence belongs to the glycosyl hydrolase 42 family.

The catalysed reaction is Hydrolysis of terminal non-reducing beta-D-galactose residues in beta-D-galactosides.. With respect to regulation, activity stimulated by beta-mercaptoethanol. In terms of biological role, highly specific towards beta-D-galactoside substrates. Hydrolyzes 5-bromo-4-chloro-3-indolyl-beta-D-galactopyranoside (X-Gal) and o-nitrophenyl-beta-D-galactopyranoside (ONPG). Has activity against p-nitrophenyl(pNP)-beta-D-galactoside, but not significantly at all towards pNP-alpha-D-galactoside, pNP-beta-D-glucoside, pNP-beta-D-mannoside, pNP-beta-L-fucoside, pNP-beta-D-xyloside, pNP-beta-L-arabinoside, pNP-beta-D-galuronide, pNP-beta-D-glucuronide, pNP-beta-D-lactoside or pNP-beta-D-cellobioside. The chain is Beta-galactosidase from Arthrobacter sp.